Consider the following 253-residue polypeptide: Imidazole glycerol phosphate synthase subunit HisF (253 aa).

Active-site residues include aspartate 11 and aspartate 130.

It belongs to the HisA/HisF family. Heterodimer of HisH and HisF.

The protein resides in the cytoplasm. It catalyses the reaction 5-[(5-phospho-1-deoxy-D-ribulos-1-ylimino)methylamino]-1-(5-phospho-beta-D-ribosyl)imidazole-4-carboxamide + L-glutamine = D-erythro-1-(imidazol-4-yl)glycerol 3-phosphate + 5-amino-1-(5-phospho-beta-D-ribosyl)imidazole-4-carboxamide + L-glutamate + H(+). Its pathway is amino-acid biosynthesis; L-histidine biosynthesis; L-histidine from 5-phospho-alpha-D-ribose 1-diphosphate: step 5/9. IGPS catalyzes the conversion of PRFAR and glutamine to IGP, AICAR and glutamate. The HisF subunit catalyzes the cyclization activity that produces IGP and AICAR from PRFAR using the ammonia provided by the HisH subunit. This chain is Imidazole glycerol phosphate synthase subunit HisF, found in Lysinibacillus sphaericus (strain C3-41).